The sequence spans 499 residues: Alpha-amylase 3 (499 aa).

Ca(2+) contacts are provided by Asn127 and Asp183. Catalysis depends on Asp213, which acts as the Nucleophile. His217 is a Ca(2+) binding site. Catalysis depends on Glu248, which acts as the Proton donor.

It belongs to the glycosyl hydrolase 13 family. Monomer. The cofactor is Ca(2+).

It is found in the cytoplasm. It catalyses the reaction Endohydrolysis of (1-&gt;4)-alpha-D-glucosidic linkages in polysaccharides containing three or more (1-&gt;4)-alpha-linked D-glucose units.. In Dictyoglomus thermophilum (strain ATCC 35947 / DSM 3960 / H-6-12), this protein is Alpha-amylase 3 (amyC).